We begin with the raw amino-acid sequence, 267 residues long: Urease accessory protein UreD (267 aa).

The protein belongs to the UreD family. UreD, UreF and UreG form a complex that acts as a GTP-hydrolysis-dependent molecular chaperone, activating the urease apoprotein by helping to assemble the nickel containing metallocenter of UreC. The UreE protein probably delivers the nickel.

The protein resides in the cytoplasm. Required for maturation of urease via the functional incorporation of the urease nickel metallocenter. This is Urease accessory protein UreD from Synechococcus sp. (strain JA-2-3B'a(2-13)) (Cyanobacteria bacterium Yellowstone B-Prime).